The sequence spans 339 residues: MAIVYGAILFQIILIACAEFPPEWHAWKATHSISYESEHEERRRHVVWQQNQEYIDQHNKYKEQFGYTLEMNKFGDMSNAEFAELMMCVQDYNHHGNLTESLLADNKFKGRVREYQAPATVSLPETVDWRTGGAVTHVKDQLRCGCSYAFAAVGALEGAAALARGRTASLSEQNVLDCSVPYGNHGCSCEDVNNAFMYVIDNGGLDTTSSYPYVSRQYYCKFKSSGVGATATGIVTISSGDESSLESALATAGPVAVYIDASHSSFQFYKYGVLNVPNCSRSKLSHAMILIGYGTTSSKKYWLLKNSWGPNWGISGYIKMSRGMSNQCGIATYASFPTL.

Positions 1 to 18 are cleaved as a signal peptide; that stretch reads MAIVYGAILFQIILIACA. Positions 19 to 122 are excised as a propeptide; the sequence is EFPPEWHAWK…REYQAPATVS (104 aa). Leu123 carries the n,N-dimethylleucine; alternate modification. Position 123 is an N-methylleucine; alternate (Leu123). Ser188 bears the Phosphoserine mark. Tyr219 is subject to Phosphotyrosine. Catalysis depends on residues His286 and Asn306. Ser335 bears the Phosphoserine mark.

It belongs to the peptidase C1 family. As to quaternary structure, homodimer. Homodimerization occurs as a result of non-covalent interactions and not through disulfide linkages between the two monomers.

Functionally, polymerizes silica around the axial filament during spicule formation. This chain is Silicatein, found in Petrosia ficiformis (Common Mediterranean sponge).